Here is a 388-residue protein sequence, read N- to C-terminus: Pepsin A-5 (388 aa).

The signal sequence occupies residues 1-15 (MKWLLLLGLVALSEC). Residues 16–62 (IMYKVPLIRKKSLRRTLSERGLLKDFLKKHNLNPARKYFPQWEAPTL) constitute a propeptide, activation peptide. The region spanning 76 to 385 (YFGTIGIGTP…DRANNQVGLA (310 aa)) is the Peptidase A1 domain. The active site involves D94. A disulfide bridge connects residues C107 and C112. S130 carries the phosphoserine modification. The cysteines at positions 268 and 272 are disulfide-linked. Residue D277 is part of the active site. C311 and C344 form a disulfide bridge.

This sequence belongs to the peptidase A1 family.

The protein localises to the secreted. The enzyme catalyses Preferential cleavage: hydrophobic, preferably aromatic, residues in P1 and P1' positions. Cleaves 1-Phe-|-Val-2, 4-Gln-|-His-5, 13-Glu-|-Ala-14, 14-Ala-|-Leu-15, 15-Leu-|-Tyr-16, 16-Tyr-|-Leu-17, 23-Gly-|-Phe-24, 24-Phe-|-Phe-25 and 25-Phe-|-Tyr-26 bonds in the B chain of insulin.. Functionally, shows particularly broad specificity; although bonds involving phenylalanine and leucine are preferred, many others are also cleaved to some extent. This Homo sapiens (Human) protein is Pepsin A-5 (PGA5).